A 208-amino-acid chain; its full sequence is HTLV-1 basic zipper factor (208 aa).

The tract at residues 59–93 (RLRWGPVGEEAPPRGETHRDRQRRAEEKRKRKRER) is disordered. The span at 69 to 86 (APPRGETHRDRQRRAEEK) shows a compositional bias: basic and acidic residues. 3 consecutive short sequence motifs (nuclear localization signal) follow at residues 86–91 (KRKRKR), 115–119 (RRRRA), and 136–140 (RRERK). Over residues 125–143 (DRARRKLEEEERRERKWRQ) the composition is skewed to basic and acidic residues. Residues 125–160 (DRARRKLEEEERRERKWRQTEQGAKQRSARKEKMTE) form a disordered region.

The protein belongs to the HTLV-1 HBZ protein family. As to quaternary structure, interacts with host ATF4; this interaction inhibits viral RNA transcriptional activation by preventing ATF4 binding to Tax-responsive elements. Interacts with host CREB1; this interaction inhibits host CREB1 transcriptional activity. Interacts with host JUN, JUNB and JUND. Interacts with host EP300.

It is found in the host nucleus. In terms of biological role, contributes to the regulation of viral RNA transcription by interacting with host proteins involved in transcriptional activation such as ATF4, or CREB1, and by inhibiting their activity. Additionally, HBZ suppresses host NF-kappa-B-driven transcription mediated by host RELA as well as transcription of some classical NF-kappa-B target genes, including IL8, IL2RA, IRF4, VCAM1, and VEGFA. In Human T-cell leukemia virus 1 (isolate Melanesia mel5 subtype C) (HTLV-1), this protein is HTLV-1 basic zipper factor (HBZ).